Here is a 190-residue protein sequence, read N- to C-terminus: dTTP/UTP pyrophosphatase (190 aa).

Residue D70 is the Proton acceptor of the active site.

This sequence belongs to the Maf family. YhdE subfamily. The cofactor is a divalent metal cation.

The protein localises to the cytoplasm. It catalyses the reaction dTTP + H2O = dTMP + diphosphate + H(+). It carries out the reaction UTP + H2O = UMP + diphosphate + H(+). Nucleoside triphosphate pyrophosphatase that hydrolyzes dTTP and UTP. May have a dual role in cell division arrest and in preventing the incorporation of modified nucleotides into cellular nucleic acids. The sequence is that of dTTP/UTP pyrophosphatase from Gloeobacter violaceus (strain ATCC 29082 / PCC 7421).